Here is a 554-residue protein sequence, read N- to C-terminus: uncharacterized protein (554 aa).

Disordered regions lie at residues 1 to 127 (MTTH…NYND), 139 to 173 (IEDD…SKAG), 293 to 395 (NNNN…PLSE), and 416 to 509 (FGFS…RKIR). Low complexity-rich tracts occupy residues 9 to 30 (SSSN…NNNI), 46 to 55 (DPTSSSSPTN), and 63 to 125 (SNSN…LINY). A compositionally biased stretch (acidic residues) spans 139–153 (IEDDEEYEEIGDEES). The segment covering 164–173 (NDSLNGSKAG) has biased composition (polar residues). 3 stretches are compositionally biased toward low complexity: residues 293-387 (NNNN…CSSN), 416-449 (FGFS…SSIS), and 461-484 (SPPL…NNNH). Residues 485 to 508 (HNNHHQNHHHQNHNHQHHSKKRKI) show a composition bias toward basic residues.

This is an uncharacterized protein from Dictyostelium discoideum (Social amoeba).